We begin with the raw amino-acid sequence, 106 residues long: Thiosulfate sulfurtransferase GlpE (106 aa).

Residues 17–105 (EQGEAKLVDI…WQRAQLPIVR (89 aa)) enclose the Rhodanese domain. The active-site Cysteine persulfide intermediate is the Cys65.

The protein belongs to the GlpE family.

The protein localises to the cytoplasm. The enzyme catalyses thiosulfate + hydrogen cyanide = thiocyanate + sulfite + 2 H(+). It catalyses the reaction thiosulfate + [thioredoxin]-dithiol = [thioredoxin]-disulfide + hydrogen sulfide + sulfite + 2 H(+). Functionally, transferase that catalyzes the transfer of sulfur from thiosulfate to thiophilic acceptors such as cyanide or dithiols. May function in a CysM-independent thiosulfate assimilation pathway by catalyzing the conversion of thiosulfate to sulfite, which can then be used for L-cysteine biosynthesis. This chain is Thiosulfate sulfurtransferase GlpE, found in Vibrio parahaemolyticus serotype O3:K6 (strain RIMD 2210633).